The primary structure comprises 376 residues: 23S rRNA (uracil(747)-C(5))-methyltransferase RlmC (376 aa).

4 residues coordinate [4Fe-4S] cluster: cysteine 3, cysteine 11, cysteine 14, and cysteine 87. Residues glutamine 212, phenylalanine 241, glutamate 262, and asparagine 307 each contribute to the S-adenosyl-L-methionine site. Residue cysteine 334 is the Nucleophile of the active site.

This sequence belongs to the class I-like SAM-binding methyltransferase superfamily. RNA M5U methyltransferase family. RlmC subfamily.

It carries out the reaction uridine(747) in 23S rRNA + S-adenosyl-L-methionine = 5-methyluridine(747) in 23S rRNA + S-adenosyl-L-homocysteine + H(+). In terms of biological role, catalyzes the formation of 5-methyl-uridine at position 747 (m5U747) in 23S rRNA. This Yersinia pseudotuberculosis serotype O:1b (strain IP 31758) protein is 23S rRNA (uracil(747)-C(5))-methyltransferase RlmC.